Reading from the N-terminus, the 231-residue chain is Orotidine 5'-phosphate decarboxylase (231 aa).

Substrate-binding positions include aspartate 11, lysine 33, 60 to 69 (DLKFHDIPNT), threonine 120, arginine 181, glutamine 190, glycine 210, and arginine 211. Catalysis depends on lysine 62, which acts as the Proton donor.

It belongs to the OMP decarboxylase family. Type 1 subfamily. As to quaternary structure, homodimer.

It catalyses the reaction orotidine 5'-phosphate + H(+) = UMP + CO2. The protein operates within pyrimidine metabolism; UMP biosynthesis via de novo pathway; UMP from orotate: step 2/2. Functionally, catalyzes the decarboxylation of orotidine 5'-monophosphate (OMP) to uridine 5'-monophosphate (UMP). In Vibrio cholerae serotype O1 (strain ATCC 39315 / El Tor Inaba N16961), this protein is Orotidine 5'-phosphate decarboxylase.